The sequence spans 277 residues: Urease accessory protein UreD (277 aa).

It belongs to the UreD family. UreD, UreF and UreG form a complex that acts as a GTP-hydrolysis-dependent molecular chaperone, activating the urease apoprotein by helping to assemble the nickel containing metallocenter of UreC. The UreE protein probably delivers the nickel.

It localises to the cytoplasm. Required for maturation of urease via the functional incorporation of the urease nickel metallocenter. This chain is Urease accessory protein UreD, found in Sinorhizobium medicae (strain WSM419) (Ensifer medicae).